A 79-amino-acid chain; its full sequence is Morintide mO1 (79 aa).

An N-terminal signal peptide occupies residues 1–20; sequence MAKLSFLSLFLLCLVATATA. The 43-residue stretch at 21–63 folds into the Chitin-binding type-1 domain; that stretch reads QNCGRQAGNRACANQLCCSQYGFCGSTSEYCSRANGCQSNCRG. 4 cysteine pairs are disulfide-bonded: C23–C38, C32–C44, C37–C51, and C57–C61. A propeptide spanning residues 64 to 79 is cleaved from the precursor; sequence GGGADGAGGEAGGGGP.

Leaves (at protein level).

In terms of biological role, chitin-binding protein which functions in defense against chitin-containing fungal pathogens. Inhibits the growth of budding hyphae in A.alternata and A.brassiciola. The protein is Morintide mO1 of Moringa oleifera (Horseradish tree).